The chain runs to 423 residues: Sorting nexin-4 (423 aa).

The span at 1–21 shows a compositional bias: basic and acidic residues; sequence MTDKGKNDLTSKAKDKARGNP. The segment at 1–25 is disordered; that stretch reads MTDKGKNDLTSKAKDKARGNPEKPP. Residues 29 to 157 enclose the PX domain; sequence EIIVSDPQKR…TFLVSKDWES (129 aa). 4 residues coordinate a 1,2-diacyl-sn-glycero-3-phospho-(1D-myo-inositol-3-phosphate): arginine 78, serine 80, lysine 104, and arginine 123. Coiled-coil stretches lie at residues 217–252 and 346–381; these read KKNDSMSEDYTKLGSNLQELQELVTGENEELAAKLK and SRREKINKLEGKITSLTGELENAKKVADGFEQECLK.

This sequence belongs to the sorting nexin family. Forms a complex with ATG20 and ATG17. Binds also to SNC1 and SNX41.

It localises to the cytoplasm. The protein resides in the cytosol. Its subcellular location is the preautophagosomal structure membrane. The protein localises to the endosome membrane. Functionally, sorting nexin, involved in the separation or division of vacuoles throughout the entire life cycle of the cells. Involved in retrieval of late-Golgi SNAREs from post-Golgi endosomes to the trans-Golgi network, for cytoplasm to vacuole transport (Cvt), and autophagy of large cargos including mitophagy, pexophagy and glycophagy. Involved in proper sorting of the v-SNARE protein SNC1. In Saccharomyces cerevisiae (strain ATCC 204508 / S288c) (Baker's yeast), this protein is Sorting nexin-4.